Here is a 359-residue protein sequence, read N- to C-terminus: Fructose-bisphosphate aldolase (359 aa).

S61 contributes to the D-glyceraldehyde 3-phosphate binding site. Catalysis depends on D109, which acts as the Proton donor. Zn(2+) is bound by residues H110, D144, E174, and H226. Residue G227 coordinates dihydroxyacetone phosphate. Position 265 (H265) interacts with Zn(2+). Dihydroxyacetone phosphate is bound by residues 266-268 (GGS) and 287-290 (NIDT).

Belongs to the class II fructose-bisphosphate aldolase family. Zn(2+) is required as a cofactor.

The enzyme catalyses beta-D-fructose 1,6-bisphosphate = D-glyceraldehyde 3-phosphate + dihydroxyacetone phosphate. It participates in carbohydrate degradation; glycolysis; D-glyceraldehyde 3-phosphate and glycerone phosphate from D-glucose: step 4/4. In terms of biological role, catalyzes the aldol condensation of dihydroxyacetone phosphate (DHAP or glycerone-phosphate) with glyceraldehyde 3-phosphate (G3P) to form fructose 1,6-bisphosphate (FBP) in gluconeogenesis and the reverse reaction in glycolysis. The protein is Fructose-bisphosphate aldolase (fba) of Borreliella burgdorferi (strain ATCC 35210 / DSM 4680 / CIP 102532 / B31) (Borrelia burgdorferi).